A 580-amino-acid chain; its full sequence is MTNHEQVLTDYLAAFIEELVQAGVKEAIISPGSRSTPLALMMAEHPILKIYVDVDERSAGFFALGLAKASKRPVVLLCTSGTAAANYFPAVAEANLSQIPLIVLTADRPHELRNVGAPQAMDQLHLYGSHVKDFTDMALPENSEEMLRYAKWHGSRAVDIAMKTPRGPVHLNFPLREPLVPILEPSPFTATGKKHHHVHIYYTHEVLDDSSIQKMVTECTGKKGVFVVGPIDKKELEQPMVDLAKKLGWPILADPLSGLRSYGALDEVVIDQYDAFLKEAEIIDKLTPEVVIRFGSMPVSKPLKNWLEQLSDIRFYVVDPGAAWKDPIKAVTDMIHCDERFLLDIMQQNMPDDAKDAAWLNGWTSYNKVAREIVLAEMANTTILEEGKIVAELRRLLPDKAGLFIGNSMPIRDVDTYFSQIDKKIKMLANRGANGIDGVVSSALGASVVFQPMFLLIGDLSFYHDMNGLLMAKKYKMNLTIVIVNNDGGGIFSFLPQANEPKYFESLFGTSTELDFRFAAAFYDADYHEAKSVDELEEAIDKASYHKGLDIIEVKTNRHENKANHQALWVKIADALKALD.

It belongs to the TPP enzyme family. MenD subfamily. In terms of assembly, homodimer. Requires Mg(2+) as cofactor. It depends on Mn(2+) as a cofactor. Thiamine diphosphate is required as a cofactor.

The catalysed reaction is isochorismate + 2-oxoglutarate + H(+) = 5-enolpyruvoyl-6-hydroxy-2-succinyl-cyclohex-3-ene-1-carboxylate + CO2. The protein operates within quinol/quinone metabolism; 1,4-dihydroxy-2-naphthoate biosynthesis; 1,4-dihydroxy-2-naphthoate from chorismate: step 2/7. It functions in the pathway quinol/quinone metabolism; menaquinone biosynthesis. In terms of biological role, catalyzes the thiamine diphosphate-dependent decarboxylation of 2-oxoglutarate and the subsequent addition of the resulting succinic semialdehyde-thiamine pyrophosphate anion to isochorismate to yield 2-succinyl-5-enolpyruvyl-6-hydroxy-3-cyclohexene-1-carboxylate (SEPHCHC). This is 2-succinyl-5-enolpyruvyl-6-hydroxy-3-cyclohexene-1-carboxylate synthase from Listeria monocytogenes serotype 4b (strain F2365).